A 734-amino-acid chain; its full sequence is Cullin-4 (734 aa).

A Cullin neddylation domain is found at 666 to 728 (DRQFELQASI…KEYLEREDND (63 aa)). A Glycyl lysine isopeptide (Lys-Gly) (interchain with G-Cter in NEDD8) cross-link involves residue K680.

This sequence belongs to the cullin family. In terms of assembly, component of the Clr4 methyltransferase complex (ClrC) composed of at least clr4, rik1, pcu4, rbx1, raf1 and raf2. The cullin pcu4, rik1, raf1, raf2 and the ring-box protein rbx1 are components of an E3 ubiquitin ligase, whose activity is essential for heterochromatin assembly. Neddylated; enhancing the ubiquitin-ligase activity.

Its subcellular location is the cytoplasm. The protein localises to the nucleus. It localises to the chromosome. Its pathway is protein modification; protein ubiquitination. Required, indirectly, for activation of ribonucleotide reductase through the degradation of the protein spd1, thereby supplying deoxyribonucleotides for DNA replication and repair. Also has a role as a scaffold for assembling ubiquitin ligases. Component of the Clr4 methyltransferase complex (ClrC) which contributes to the establishment of heterochromatin by specifically methylating histone H3 to form H3K9me. ClrC preferentially ubiquitylates H3K14 and ClrC-mediated H3 ubiquitination promotes clr4 methyltransferase activity for the methylation of H3K9. H3K9me represents a specific tag for epigenetic transcriptional repression by recruiting swi6/HP1 to methylated histones which leads to transcriptional silencing within centromeric heterochromatin, telomeric regions and at the silent mating-type loci. This chain is Cullin-4 (pcu4), found in Schizosaccharomyces pombe (strain 972 / ATCC 24843) (Fission yeast).